Here is a 239-residue protein sequence, read N- to C-terminus: Orotidine 5'-phosphate decarboxylase (239 aa).

Residues aspartate 15, lysine 37, aspartate 64–threonine 73, threonine 126, arginine 187, glutamine 196, glycine 216, and arginine 217 each bind substrate. Catalysis depends on lysine 66, which acts as the Proton donor.

The protein belongs to the OMP decarboxylase family. Type 1 subfamily. In terms of assembly, homodimer.

The catalysed reaction is orotidine 5'-phosphate + H(+) = UMP + CO2. It participates in pyrimidine metabolism; UMP biosynthesis via de novo pathway; UMP from orotate: step 2/2. Catalyzes the decarboxylation of orotidine 5'-monophosphate (OMP) to uridine 5'-monophosphate (UMP). The polypeptide is Orotidine 5'-phosphate decarboxylase (Geobacter metallireducens (strain ATCC 53774 / DSM 7210 / GS-15)).